A 132-amino-acid chain; its full sequence is FPRL1 inhibitory protein (132 aa).

An N-terminal signal peptide occupies residues 1-28; the sequence is MKKNITKVIIASTVIATGLLTQTNDAKA.

The protein belongs to the CHIPS/FLIPr family.

The protein localises to the secreted. Functionally, may be involved in countering the first line of host defense mechanisms. Impairs the leukocyte response to FPRL1 agonists by binding directly to host FPRL1. The polypeptide is FPRL1 inhibitory protein (flr) (Staphylococcus aureus (strain MW2)).